Here is a 486-residue protein sequence, read N- to C-terminus: NADH-quinone oxidoreductase subunit N (486 aa).

14 consecutive transmembrane segments (helical) span residues 8–28 (FIAL…MLAV), 38–58 (ATLS…VLGV), 73–93 (ACFY…LAHA), 105–125 (LYLL…AQHL), 128–148 (LFIG…YAFF), 169–189 (FLLF…FAGL), 196–216 (HVLS…GLGF), 235–255 (PAPV…AVLL), 269–289 (LLNI…NLLA), 304–324 (IAHL…AVEA), 325–345 (VGVY…VITL), 373–393 (AVMT…GFIG), 405–427 (HLWW…YLRV), and 454–474 (IMLV…QPLL).

This sequence belongs to the complex I subunit 2 family. NDH-1 is composed of 13 different subunits. Subunits NuoA, H, J, K, L, M, N constitute the membrane sector of the complex.

It is found in the cell inner membrane. It carries out the reaction a quinone + NADH + 5 H(+)(in) = a quinol + NAD(+) + 4 H(+)(out). In terms of biological role, NDH-1 shuttles electrons from NADH, via FMN and iron-sulfur (Fe-S) centers, to quinones in the respiratory chain. The immediate electron acceptor for the enzyme in this species is believed to be ubiquinone. Couples the redox reaction to proton translocation (for every two electrons transferred, four hydrogen ions are translocated across the cytoplasmic membrane), and thus conserves the redox energy in a proton gradient. This chain is NADH-quinone oxidoreductase subunit N, found in Pseudomonas aeruginosa (strain ATCC 15692 / DSM 22644 / CIP 104116 / JCM 14847 / LMG 12228 / 1C / PRS 101 / PAO1).